The chain runs to 664 residues: MSLQRTVRVSLEHPTSAVCVAGVETIVDIYGSVPEGTDMFEVYGTPGVDIYVSPSMERNRERADTRRWCFNKGLEIIVVMNSPSNDLNDSHVQIAYHSSHEHLPLAYAVLYLTCVDITLDCDMNCADRQDRSFVDKRQWMWGPDGYGAILLVNCDRDEVSSDAQDNCDQCVRCLQDLEDMSVMVLRTQGPESLFDDHRLILHTSSCDAERARVFHVCGPEDSCEAYRCVLGPDRMSYEVPRLKGYEERFYVEGLSFPDAGFPGILSFHITLLDDSNEDYSETPIFTDTVVFRVAPWIMTPSTLPPLEVYVCQVRNNTCFVEAVEELARKAGCKLTICPQAENRNDRWIQDEMELGYTQAPHKTLPVVFDSPRNGELQGFPYKRILGLDFGYVTREPPDSSVSGLDSFGNLEVSPPVVANGKEYPLGRILIGGNLPGSRGRRVTQVVRDFLHAQKVQPLVELFVDWLAVGHVDEFLSFVPAPDGKGFRLLLASPGACFRLFQEKQKWGHGRSLLFEGVIGDRRVQTISINQVLSNQSLINFNKFAQSCIDWNREVLKRELGLGESDIIDIPQLFKSEKRKAVAFFPDLVNMLVLGKHLGIPKPFGPIINGRCCLEEKVRSLLEPLGLHCTFIDDFTPYHMLHGEVHCGTNVRREPFAFKWWHMVP.

The protein belongs to the protein arginine deiminase family. Ca(2+) is required as a cofactor. Epidermis and hair follicles.

The protein resides in the cytoplasm. The catalysed reaction is L-arginyl-[protein] + H2O = L-citrullyl-[protein] + NH4(+). Its function is as follows. Catalyzes the deimination of arginine residues of proteins. In Rattus norvegicus (Rat), this protein is Protein-arginine deiminase type-3 (Padi3).